Reading from the N-terminus, the 425-residue chain is MHDIKLIRDNPDAFDAGLAMRGLPAQSATLIELDASRREALGKQQDAETERNALSKQIGKAKASGDEAEFNRLRSEVDRLKAVLEESGQQARHFDEVLNQHLAALPNLPHADVPQGADEADNVEERRWGEPRTMAFTPRDHVDLGESLGQMDFKKAAEISGSRFVALRGGLARLERALAQFMLDLHTTEHGYEEVSPPYMVRDEAVFGTGQLPKFAEDLFRTTDDHWLIPTAEVPLTNLARETIHAEADLPMRMTAYTPCFRSEAGSAGRDTRGMIRLHQFQKVEMVSIVTPDESDAELERMTGCAEKVLQLLELPYRVMKLCTGDMGFAARRTYDLEVWMPSQDCYREISSCSTCGDFQARRMDARFRKEGEKRPAFLHTLNGSGVAVGRALVAVLENHQNEDGSITIPAALRPYMGGVERIEG.

L-serine is bound at residue 231–233; the sequence is TAE. Position 262–264 (262–264) interacts with ATP; it reads RSE. Position 285 (E285) interacts with L-serine. 349–352 lines the ATP pocket; it reads EISS. S385 serves as a coordination point for L-serine.

Belongs to the class-II aminoacyl-tRNA synthetase family. Type-1 seryl-tRNA synthetase subfamily. In terms of assembly, homodimer. The tRNA molecule binds across the dimer.

The protein resides in the cytoplasm. The enzyme catalyses tRNA(Ser) + L-serine + ATP = L-seryl-tRNA(Ser) + AMP + diphosphate + H(+). The catalysed reaction is tRNA(Sec) + L-serine + ATP = L-seryl-tRNA(Sec) + AMP + diphosphate + H(+). It participates in aminoacyl-tRNA biosynthesis; selenocysteinyl-tRNA(Sec) biosynthesis; L-seryl-tRNA(Sec) from L-serine and tRNA(Sec): step 1/1. Functionally, catalyzes the attachment of serine to tRNA(Ser). Is also able to aminoacylate tRNA(Sec) with serine, to form the misacylated tRNA L-seryl-tRNA(Sec), which will be further converted into selenocysteinyl-tRNA(Sec). This is Serine--tRNA ligase from Maricaulis maris (strain MCS10) (Caulobacter maris).